The primary structure comprises 127 residues: Small ribosomal subunit protein uS11 (127 aa).

This sequence belongs to the universal ribosomal protein uS11 family. Part of the 30S ribosomal subunit. Interacts with proteins S7 and S18. Binds to IF-3.

In terms of biological role, located on the platform of the 30S subunit, it bridges several disparate RNA helices of the 16S rRNA. Forms part of the Shine-Dalgarno cleft in the 70S ribosome. The sequence is that of Small ribosomal subunit protein uS11 from Flavobacterium psychrophilum (strain ATCC 49511 / DSM 21280 / CIP 103535 / JIP02/86).